The chain runs to 180 residues: Type-1 fimbrial protein, C chain (180 aa).

Residues 1-23 form the signal peptide; it reads MKLKFISMAVFSALTLGVATNAS. An intrachain disulfide couples Cys-44 to Cys-84.

The protein belongs to the fimbrial protein family.

The protein resides in the fimbrium. In terms of biological role, fimbriae (also called pili), polar filaments radiating from the surface of the bacterium to a length of 0.5-1.5 micrometers and numbering 100-300 per cell, enable bacteria to colonize the epithelium of specific host organs. The chain is Type-1 fimbrial protein, C chain (pilC) from Escherichia coli O6:H1 (strain CFT073 / ATCC 700928 / UPEC).